The chain runs to 89 residues: MDNIVYVGNKGVMNYVLAVITQFNSENAQEVIVKARGKAISRAVDVEEMVTKRFMPEVKIKEINLGTDHIQGEDGKSINVSTIEIILFK.

Belongs to the histone-like Alba family.

It is found in the cytoplasm. The protein resides in the chromosome. Functionally, binds double-stranded DNA tightly but without sequence specificity. Involved in DNA compaction. The polypeptide is DNA/RNA-binding protein Alba (Methanococcus maripaludis (strain DSM 14266 / JCM 13030 / NBRC 101832 / S2 / LL)).